The chain runs to 238 residues: 1-(5-phosphoribosyl)-5-[(5-phosphoribosylamino)methylideneamino] imidazole-4-carboxamide isomerase (238 aa).

The active-site Proton acceptor is the D8. Catalysis depends on D129, which acts as the Proton donor.

The protein belongs to the HisA/HisF family.

The protein resides in the cytoplasm. It carries out the reaction 1-(5-phospho-beta-D-ribosyl)-5-[(5-phospho-beta-D-ribosylamino)methylideneamino]imidazole-4-carboxamide = 5-[(5-phospho-1-deoxy-D-ribulos-1-ylimino)methylamino]-1-(5-phospho-beta-D-ribosyl)imidazole-4-carboxamide. It functions in the pathway amino-acid biosynthesis; L-histidine biosynthesis; L-histidine from 5-phospho-alpha-D-ribose 1-diphosphate: step 4/9. The polypeptide is 1-(5-phosphoribosyl)-5-[(5-phosphoribosylamino)methylideneamino] imidazole-4-carboxamide isomerase (Lacticaseibacillus paracasei (strain ATCC 334 / BCRC 17002 / CCUG 31169 / CIP 107868 / KCTC 3260 / NRRL B-441) (Lactobacillus paracasei)).